A 191-amino-acid polypeptide reads, in one-letter code: Guanylate kinase (191 aa).

The Guanylate kinase-like domain maps to 4 to 182 (GRLIVVSGPS…AREEMIEIMR (179 aa)). 11–18 (GPSGAGKS) serves as a coordination point for ATP.

Belongs to the guanylate kinase family.

The protein localises to the cytoplasm. It catalyses the reaction GMP + ATP = GDP + ADP. Functionally, essential for recycling GMP and indirectly, cGMP. The chain is Guanylate kinase from Rubrobacter xylanophilus (strain DSM 9941 / JCM 11954 / NBRC 16129 / PRD-1).